Consider the following 199-residue polypeptide: Pyridoxal 5'-phosphate synthase subunit PdxT (199 aa).

52–54 (GES) provides a ligand contact to L-glutamine. Cys-84 acts as the Nucleophile in catalysis. Residues Arg-115 and 143–144 (IR) each bind L-glutamine. Catalysis depends on charge relay system residues His-179 and Glu-181.

Belongs to the glutaminase PdxT/SNO family. As to quaternary structure, in the presence of PdxS, forms a dodecamer of heterodimers. Only shows activity in the heterodimer.

The catalysed reaction is aldehydo-D-ribose 5-phosphate + D-glyceraldehyde 3-phosphate + L-glutamine = pyridoxal 5'-phosphate + L-glutamate + phosphate + 3 H2O + H(+). The enzyme catalyses L-glutamine + H2O = L-glutamate + NH4(+). Its pathway is cofactor biosynthesis; pyridoxal 5'-phosphate biosynthesis. Its function is as follows. Catalyzes the hydrolysis of glutamine to glutamate and ammonia as part of the biosynthesis of pyridoxal 5'-phosphate. The resulting ammonia molecule is channeled to the active site of PdxS. The sequence is that of Pyridoxal 5'-phosphate synthase subunit PdxT from Methanosarcina mazei (strain ATCC BAA-159 / DSM 3647 / Goe1 / Go1 / JCM 11833 / OCM 88) (Methanosarcina frisia).